The sequence spans 122 residues: Small ribosomal subunit protein uS13 (122 aa).

Residues 95–122 form a disordered region; it reads GLPVRGQRTHTNARTRKGPRRGTVGKKK.

Belongs to the universal ribosomal protein uS13 family. As to quaternary structure, part of the 30S ribosomal subunit. Forms a loose heterodimer with protein S19. Forms two bridges to the 50S subunit in the 70S ribosome.

Its function is as follows. Located at the top of the head of the 30S subunit, it contacts several helices of the 16S rRNA. In the 70S ribosome it contacts the 23S rRNA (bridge B1a) and protein L5 of the 50S subunit (bridge B1b), connecting the 2 subunits; these bridges are implicated in subunit movement. Contacts the tRNAs in the A and P-sites. The sequence is that of Small ribosomal subunit protein uS13 from Nitratidesulfovibrio vulgaris (strain ATCC 29579 / DSM 644 / CCUG 34227 / NCIMB 8303 / VKM B-1760 / Hildenborough) (Desulfovibrio vulgaris).